A 406-amino-acid chain; its full sequence is Tyrosine--tRNA ligase (406 aa).

Position 39 (tyrosine 39) interacts with L-tyrosine. Residues 44 to 53 carry the 'HIGH' region motif; that stretch reads PTADSLHVGH. Tyrosine 172 and glutamine 176 together coordinate L-tyrosine. Residues 232–236 carry the 'KMSKS' region motif; it reads KMGKT. Lysine 235 is an ATP binding site. In terms of domain architecture, S4 RNA-binding spans 344-404; that stretch reads KELLDVLVDR…LGKKKFYNIV (61 aa).

The protein belongs to the class-I aminoacyl-tRNA synthetase family. TyrS type 1 subfamily. Homodimer.

The protein resides in the cytoplasm. The catalysed reaction is tRNA(Tyr) + L-tyrosine + ATP = L-tyrosyl-tRNA(Tyr) + AMP + diphosphate + H(+). Catalyzes the attachment of tyrosine to tRNA(Tyr) in a two-step reaction: tyrosine is first activated by ATP to form Tyr-AMP and then transferred to the acceptor end of tRNA(Tyr). This is Tyrosine--tRNA ligase from Fusobacterium nucleatum subsp. nucleatum (strain ATCC 25586 / DSM 15643 / BCRC 10681 / CIP 101130 / JCM 8532 / KCTC 2640 / LMG 13131 / VPI 4355).